The primary structure comprises 264 residues: Hydroxyethylthiazole kinase (264 aa).

M43 provides a ligand contact to substrate. ATP contacts are provided by R119 and T165. G192 serves as a coordination point for substrate.

Belongs to the Thz kinase family. Requires Mg(2+) as cofactor.

The catalysed reaction is 5-(2-hydroxyethyl)-4-methylthiazole + ATP = 4-methyl-5-(2-phosphooxyethyl)-thiazole + ADP + H(+). The protein operates within cofactor biosynthesis; thiamine diphosphate biosynthesis; 4-methyl-5-(2-phosphoethyl)-thiazole from 5-(2-hydroxyethyl)-4-methylthiazole: step 1/1. Functionally, catalyzes the phosphorylation of the hydroxyl group of 4-methyl-5-beta-hydroxyethylthiazole (THZ). In Anoxybacillus flavithermus (strain DSM 21510 / WK1), this protein is Hydroxyethylthiazole kinase.